We begin with the raw amino-acid sequence, 306 residues long: Dermonecrotic toxin LiSicTox-alphaIA1a (306 aa).

Residues 1–18 form the signal peptide; the sequence is MLPYIVLVLGCWSVLSQA. Residues 19–26 constitute a propeptide that is removed on maturation; that stretch reads AQTDDEER. Residue His-38 is part of the active site. Glu-58 and Asp-60 together coordinate Mg(2+). His-74 functions as the Nucleophile in the catalytic mechanism. 2 disulfides stabilise this stretch: Cys-78–Cys-84 and Cys-80–Cys-223. Position 118 (Asp-118) interacts with Mg(2+).

This sequence belongs to the arthropod phospholipase D family. Class II subfamily. Class IIa sub-subfamily. The cofactor is Mg(2+). Expressed by the venom gland.

The protein resides in the secreted. The catalysed reaction is an N-(acyl)-sphingosylphosphocholine = an N-(acyl)-sphingosyl-1,3-cyclic phosphate + choline. It carries out the reaction an N-(acyl)-sphingosylphosphoethanolamine = an N-(acyl)-sphingosyl-1,3-cyclic phosphate + ethanolamine. The enzyme catalyses a 1-acyl-sn-glycero-3-phosphocholine = a 1-acyl-sn-glycero-2,3-cyclic phosphate + choline. It catalyses the reaction a 1-acyl-sn-glycero-3-phosphoethanolamine = a 1-acyl-sn-glycero-2,3-cyclic phosphate + ethanolamine. The catalysed reaction is 1-hexadecanoyl-sn-glycero-3-phosphocholine = 1-hexadecanoyl-sn-glycero-2,3-cyclic phosphate + choline. With respect to regulation, catalytic activity and hemolysis are inhibited by divalent ion chelators (1,10-phenanthroline, EDTA, and EGTA). In terms of biological role, dermonecrotic toxins cleave the phosphodiester linkage between the phosphate and headgroup of certain phospholipids (sphingolipid and lysolipid substrates), forming an alcohol (often choline) and a cyclic phosphate. This toxin acts on sphingomyelin (SM) with high activity. It discriminate between the number of carbon atoms in the substrates, since it prefers SM with six carbons in the fatty acid chain (SM6:0) to other SMs (SM12:0 &gt; SM16:0 &gt; SM18:0 &gt; SM2:0 &gt; SM24:0). It also acts on lysophosphatidylcholine (LPC) (LPC16:0 = LPC12:0 &gt; LPC18:0), and lyso-platelet activating factor (LPAF, an alkyl-LPC) but not on phosphatidylcholine (PC). It may also act on ceramide phosphoethanolamine (CPE), lysophosphatidylcholine (LPC) and lysophosphatidylethanolamine (LPE), but not on lysophosphatidylserine (LPS), and lysophosphatidylglycerol (LPG). It acts by transphosphatidylation, releasing exclusively cyclic phosphate products as second products. In vivo, it induces dermonecrosis, vascular permeability, platelet aggregation, inflammatory response, edema and cytotoxicity against renal epithelial cells. It causes direct nephrotoxicity and is directly toxic to liver. It also induces hemolysis in a complement-dependent manner as well as in a complement-independent manner. The hemolysis provoked in a complement-independent manner is composed of several steps. The toxin binds to erythrocyte membranes, hydrolyzes membrane phospholipids (SM and LPC) thus generating metabolism products that cause hemolysis, probably by provoking an increase of calcium inside cells. The calcium influx is due to the opening of L-type calcium channels, since L-type calcium channel blockers inhibit calcium influx. Is lethal to mice when intraperitoneally injected. The polypeptide is Dermonecrotic toxin LiSicTox-alphaIA1a (Loxosceles intermedia (Brown spider)).